The following is a 254-amino-acid chain: Small ribosomal subunit protein uS5 (254 aa).

Residues 1–10 show a composition bias toward polar residues; that stretch reads MSAPEAQQQK. A disordered region spans residues 1–34; that stretch reads MSAPEAQQQKRGGFGGRNRGRPNRRGPRNTEEKG. The residue at position 2 (Ser-2) is an N-acetylserine. Residue Arg-11 is modified to Asymmetric dimethylarginine; by HMT1; alternate. An Omega-N-methylarginine; by HMT1; alternate modification is found at Arg-11. Omega-N-methylarginine; by HMT1 is present on Arg-17. Residues 18-27 are compositionally biased toward basic residues; it reads NRGRPNRRGP. Lys-33 is covalently cross-linked (Glycyl lysine isopeptide (Lys-Gly) (interchain with G-Cter in ubiquitin)). The region spanning 76-139 is the S5 DRBM domain; that stretch reads LQDEVMNIKP…IIAKLSVIPI (64 aa).

Belongs to the universal ribosomal protein uS5 family. Component of the small ribosomal subunit (SSU). Mature yeast ribosomes consist of a small (40S) and a large (60S) subunit. The 40S small subunit contains 1 molecule of ribosomal RNA (18S rRNA) and 33 different proteins (encoded by 57 genes). The large 60S subunit contains 3 rRNA molecules (25S, 5.8S and 5S rRNA) and 46 different proteins (encoded by 81 genes). Interacts with snoRNA U3. Interacts with MPP10. Component of the ribosomal small subunit (SSU) processome composed of at least 40 protein subunits and snoRNA U3. N-terminally acetylated by acetyltransferase NatA.

Its subcellular location is the cytoplasm. The protein localises to the nucleus. It localises to the nucleolus. In terms of biological role, component of the ribosome, a large ribonucleoprotein complex responsible for the synthesis of proteins in the cell. The small ribosomal subunit (SSU) binds messenger RNAs (mRNAs) and translates the encoded message by selecting cognate aminoacyl-transfer RNA (tRNA) molecules. The large subunit (LSU) contains the ribosomal catalytic site termed the peptidyl transferase center (PTC), which catalyzes the formation of peptide bonds, thereby polymerizing the amino acids delivered by tRNAs into a polypeptide chain. The nascent polypeptides leave the ribosome through a tunnel in the LSU and interact with protein factors that function in enzymatic processing, targeting, and the membrane insertion of nascent chains at the exit of the ribosomal tunnel. uS5 is important for the assembly and function of the 40S ribosomal subunit. Mutations in this protein affects the control of translational fidelity. Involved in nucleolar processing of pre-18S ribosomal RNA and ribosome assembly. In Saccharomyces cerevisiae (strain ATCC 204508 / S288c) (Baker's yeast), this protein is Small ribosomal subunit protein uS5.